A 122-amino-acid polypeptide reads, in one-letter code: Large ribosomal subunit protein uL14 (122 aa).

The protein belongs to the universal ribosomal protein uL14 family. As to quaternary structure, part of the 50S ribosomal subunit. Forms a cluster with proteins L3 and L19. In the 70S ribosome, L14 and L19 interact and together make contacts with the 16S rRNA in bridges B5 and B8.

In terms of biological role, binds to 23S rRNA. Forms part of two intersubunit bridges in the 70S ribosome. This is Large ribosomal subunit protein uL14 from Amoebophilus asiaticus (strain 5a2).